A 176-amino-acid polypeptide reads, in one-letter code: Large ribosomal subunit protein eL20 (176 aa).

A Glycyl lysine isopeptide (Lys-Gly) (interchain with G-Cter in SUMO2) cross-link involves residue Lys-11. Residue Tyr-63 is modified to Phosphotyrosine. Ser-71 carries the phosphoserine modification. Lys-76 carries the post-translational modification N6-succinyllysine. Ser-123 bears the Phosphoserine mark. Glycyl lysine isopeptide (Lys-Gly) (interchain with G-Cter in SUMO2) cross-links involve residues Lys-128 and Lys-170.

It belongs to the eukaryotic ribosomal protein eL20 family. In terms of assembly, component of the large ribosomal subunit. Binds IPO9 with high affinity.

It is found in the cytoplasm. Functionally, component of the large ribosomal subunit. The ribosome is a large ribonucleoprotein complex responsible for the synthesis of proteins in the cell. The sequence is that of Large ribosomal subunit protein eL20 (RPL18A) from Bos taurus (Bovine).